The chain runs to 388 residues: MIKNPKVLILTAHYGNGHVQVAKTLEQTFRQKGIEDVIVCDLFGESHPVITDITKYLYLKSYTVGKELYRLFYYGVEKIYDKKIASWYANFGRKRLKTLLQVEKPDIVINTFPIIAVPELKKQIGISIPVYNVLTDFCVHKIWIHREVDRYFVATDHVKKVMVDIGVPAEQIVETGIPIRSSFELKINPAIIYNKYQLCKDKKMLLIVAGAHGVLGSVKELCQSFMSVPNLQVVVVCGKNEALKQDLMELQEQGSDALKVFGYVENIDELFRVTSCMITKPGGITLSEAAALQVPVILYKPVPGQENENALYFEKKGAAVVIRDDSEVFAKTEALLQDDMKLLQMKEAMKSIYRPEPAGHIVDTILAENHAEPNHIPIKSPVLAESFT.

This sequence belongs to the glycosyltransferase 28 family. UgtP subfamily.

It is found in the cell membrane. It carries out the reaction a 1,2-diacyl-3-O-(beta-D-glucopyranosyl)-sn-glycerol + UDP-alpha-D-glucose = a 1,2-diacyl-3-O-(beta-D-Glc-(1-&gt;6)-beta-D-Glc)-sn-glycerol + UDP + H(+). It catalyses the reaction a 1,2-diacyl-3-O-(beta-D-Glc-(1-&gt;6)-beta-D-Glc)-sn-glycerol + UDP-alpha-D-glucose = a 1,2-diacyl-3-O-(beta-D-Glc-(1-&gt;6)-beta-D-Glc-(1-&gt;6)-beta-D-Glc)-sn-glycerol + UDP + H(+). The enzyme catalyses a 1,2-diacyl-sn-glycerol + UDP-alpha-D-glucose = a 1,2-diacyl-3-O-(beta-D-glucopyranosyl)-sn-glycerol + UDP + H(+). The protein operates within glycolipid metabolism; diglucosyl-diacylglycerol biosynthesis. Its function is as follows. Processive glucosyltransferase involved in the biosynthesis of both the bilayer- and non-bilayer-forming membrane glucolipids. Is able to successively transfer up to three glucosyl residues to diacylglycerol (DAG), thereby catalyzing the formation of beta-monoglucosyl-DAG (3-O-(beta-D-glucopyranosyl)-1,2-diacyl-sn-glycerol), beta-diglucosyl-DAG (3-O-(beta-D-glucopyranosyl-beta-(1-&gt;6)-D-glucopyranosyl)-1,2-diacyl-sn-glycerol) and beta-triglucosyl-DAG (3-O-(beta-D-glucopyranosyl-beta-(1-&gt;6)-D-glucopyranosyl-beta-(1-&gt;6)-D-glucopyranosyl)-1,2-diacyl-sn-glycerol). Beta-diglucosyl-DAG is the predominant glycolipid found in Bacillales and is also used as a membrane anchor for lipoteichoic acid (LTA). The protein is Processive diacylglycerol beta-glucosyltransferase of Bacillus mycoides (strain KBAB4) (Bacillus weihenstephanensis).